We begin with the raw amino-acid sequence, 628 residues long: Probable potassium transport system protein Kup (628 aa).

12 helical membrane passes run alanine 12–serine 32, leucine 57–valine 77, tryptophan 106–threonine 126, isoleucine 141–phenylalanine 161, phenylalanine 174–isoleucine 194, leucine 219–alanine 239, tryptophan 253–leucine 273, leucine 295–phenylalanine 315, isoleucine 343–phenylalanine 363, leucine 369–valine 389, alanine 402–leucine 422, and leucine 425–serine 445.

Belongs to the HAK/KUP transporter (TC 2.A.72) family.

It is found in the cell inner membrane. The enzyme catalyses K(+)(in) + H(+)(in) = K(+)(out) + H(+)(out). Transport of potassium into the cell. Likely operates as a K(+):H(+) symporter. The protein is Probable potassium transport system protein Kup of Azorhizobium caulinodans (strain ATCC 43989 / DSM 5975 / JCM 20966 / LMG 6465 / NBRC 14845 / NCIMB 13405 / ORS 571).